A 503-amino-acid polypeptide reads, in one-letter code: MAKYYNEPCHTFNEYLLIPGLSTVDCIPSNVNLSTPLVKFQKGQQSEINLKIPLVSAIMQSVSGEKMAIALAREGGISFIFGSQSIESQAAMVHAVKNFKAGFVVSDSNVKPDQTFADVLAISQRTTHNTVAVTDDGTPHGVLLGLVTQRDYPIDLTQTETKVSDMMTPFSKLVTAHQDTKLSEANKIIWEKKLNALPIIDDDQHLRYIVFRKDYDRSQVCHNELVDSQKRYLVGAGINTRDFRERVPALVEAGADVLCIDSSDGFSEWQKITIGWIREKYGDKVKVGAGNIVDGEGFRYLADAGADFIKIGIGGGSICITREQKGIGRGQATAVIDVVAERNKYFEETGIYIPVCSDGGIVYDYHMTLALAMGADFIMLGRYFARFEESPTRKVTINGSVMKEYWGEGSSRARNWQRYDLGGKQKLSFEEGVDSYVPYAGKLKDNVEASLNKVKSTMCNCGALTIPQLQSKAKITLVSSVSIVEGGAHDVIVKDRINDYHPK.

K(+) is bound by residues glycine 20 and serine 22. 2 consecutive CBS domains span residues 103-163 and 167-228; these read FVVS…ETKV and MTPF…LVDS. 261 to 263 is a binding site for NAD(+); that stretch reads DSS. K(+) contacts are provided by aspartate 264, phenylalanine 266, glycine 314, and glycine 316. 312-314 is a binding site for NAD(+); it reads GIG. Serine 317 is an IMP binding site. Cysteine 319 is a binding site for K(+). Cysteine 319 (thioimidate intermediate) is an active-site residue. Residues 358-360, 381-382, and 405-409 contribute to the IMP site; these read DGG, GR, and YWGEG. The Proton acceptor role is filled by arginine 418. Position 431 (glutamate 431) interacts with IMP. Positions 460, 485, 486, and 487 each coordinate K(+).

The protein belongs to the IMPDH/GMPR family. Homotetramer. It depends on K(+) as a cofactor.

It localises to the cytoplasm. The catalysed reaction is IMP + NAD(+) + H2O = XMP + NADH + H(+). It functions in the pathway purine metabolism; XMP biosynthesis via de novo pathway; XMP from IMP: step 1/1. Mycophenolic acid (MPA) is a non-competitive inhibitor that prevents formation of the closed enzyme conformation by binding to the same site as the amobile flap. In contrast, mizoribine monophosphate (MZP) is a competitive inhibitor that induces the closed conformation. MPA is a potent inhibitor of mammalian IMPDHs but a poor inhibitor of the bacterial enzymes. MZP is a more potent inhibitor of bacterial IMPDH. In terms of biological role, catalyzes the conversion of inosine 5'-phosphate (IMP) to xanthosine 5'-phosphate (XMP), the first committed and rate-limiting step in the de novo synthesis of guanine nucleotides, and therefore plays an important role in the regulation of cell growth. Could also have a single-stranded nucleic acid-binding activity and could play a role in RNA and/or DNA metabolism. The polypeptide is Inosine-5'-monophosphate dehydrogenase (Tritrichomonas foetus (Trichomonas foetus)).